The following is a 286-amino-acid chain: Shikimate dehydrogenase (NADP(+)) (286 aa).

Residues 22–24 and Thr71 each bind shikimate; that span reads SRS. Lys75 acts as the Proton acceptor in catalysis. Glu87 contributes to the NADP(+) binding site. Residues Asn96 and Asp111 each coordinate shikimate. NADP(+)-binding positions include 136–140, 160–165, and Ile225; these read GAGGA and NRTAAR. Tyr227 serves as a coordination point for shikimate. Gly248 provides a ligand contact to NADP(+).

This sequence belongs to the shikimate dehydrogenase family. Homodimer.

The enzyme catalyses shikimate + NADP(+) = 3-dehydroshikimate + NADPH + H(+). The protein operates within metabolic intermediate biosynthesis; chorismate biosynthesis; chorismate from D-erythrose 4-phosphate and phosphoenolpyruvate: step 4/7. In terms of biological role, involved in the biosynthesis of the chorismate, which leads to the biosynthesis of aromatic amino acids. Catalyzes the reversible NADPH linked reduction of 3-dehydroshikimate (DHSA) to yield shikimate (SA). The protein is Shikimate dehydrogenase (NADP(+)) of Sinorhizobium fredii (strain NBRC 101917 / NGR234).